Here is a 299-residue protein sequence, read N- to C-terminus: Ribosomal RNA small subunit methyltransferase H (299 aa).

S-adenosyl-L-methionine is bound by residues 36–38 (GGH), Asp-55, Asp-103, and Gln-110. 2 stretches are compositionally biased toward basic and acidic residues: residues 268 to 282 (KPVRPSEEEIRENPR) and 289 to 299 (RAAERIEKGGD). Residues 268-299 (KPVRPSEEEIRENPRARSGRLRAAERIEKGGD) are disordered.

Belongs to the methyltransferase superfamily. RsmH family.

It is found in the cytoplasm. It catalyses the reaction cytidine(1402) in 16S rRNA + S-adenosyl-L-methionine = N(4)-methylcytidine(1402) in 16S rRNA + S-adenosyl-L-homocysteine + H(+). In terms of biological role, specifically methylates the N4 position of cytidine in position 1402 (C1402) of 16S rRNA. This is Ribosomal RNA small subunit methyltransferase H from Thermotoga sp. (strain RQ2).